A 659-amino-acid polypeptide reads, in one-letter code: Nitrate import ATP-binding protein NrtC (659 aa).

In terms of domain architecture, ABC transporter spans 5–239; it reads LAVDHVHQVF…RPRQRLEMME (235 aa). 42–49 is a binding site for ATP; the sequence is GHSGCGKS. The segment at 255–278 is linker; the sequence is QQQRRAKRRAKAAAPAPAVAASQQ. Residues 279–659 are nrtA-like; that stretch reads KTVRLGFLPG…VAPIPLATSA (381 aa).

It belongs to the ABC transporter superfamily. Nitrate/nitrite/cyanate uptake transporter (NitT) (TC 3.A.1.16) family. The complex is composed of two ATP-binding proteins (NrtC and NrtD), two transmembrane proteins (NrtB) and a solute-binding protein (NrtA).

It is found in the cell inner membrane. It catalyses the reaction nitrate(out) + ATP + H2O = nitrate(in) + ADP + phosphate + H(+). Transport is inhibited by ammonium. The C-terminal domain of NrtC is involved in the ammonium-promoted inhibition of the nitrate/nitrite transporter. Part of the ABC transporter complex NrtABCD involved in nitrate uptake. The complex is probably also involved in nitrite transport. Probably responsible for energy coupling to the transport system. This is Nitrate import ATP-binding protein NrtC from Synechococcus elongatus (strain ATCC 33912 / PCC 7942 / FACHB-805) (Anacystis nidulans R2).